Reading from the N-terminus, the 785-residue chain is Potassium transporter 5 (785 aa).

The Cytoplasmic portion of the chain corresponds to 1 to 60; the sequence is MDGEEHQIDGDEVNNHENKLNEKKKSWGKLYRPDSFIIEAGQTPTNTGRRSLMSWRTTMS. Ser-35 is subject to Phosphoserine. A helical transmembrane segment spans residues 61–81; that stretch reads LAFQSLGVVYGDIGTSPLYVY. At 82–97 the chain is on the extracellular side; it reads ASTFTDGINDKDDVVG. Residues 98-118 form a helical membrane-spanning segment; it reads VLSLIIYTITLVALLKYVFIV. Over 119–184 the chain is Cytoplasmic; that stretch reads LQANDNGEGG…EKLENSKFAK (66 aa). Residues 185 to 205 traverse the membrane as a helical segment; it reads IILFLVTIMGTSMVIGDGILT. Topologically, residues 206 to 218 are extracellular; sequence PSISVLSAVSGIK. The helical transmembrane segment at 219–239 threads the bilayer; it reads SLGQNTVVGVSVAILIVLFAF. The Cytoplasmic segment spans residues 240 to 247; it reads QRFGTDKV. A helical membrane pass occupies residues 248-268; that stretch reads GFSFAPIILVWFTFLIGIGLF. At 269–297 the chain is on the extracellular side; that stretch reads NLFKHDITVLKALNPLYIIYYFRRTGRQG. Residues 298–318 form a helical membrane-spanning segment; that stretch reads WISLGGVFLCITGTEAMFADL. At 319–327 the chain is on the cytoplasmic side; sequence GHFSVRAVQ. A helical transmembrane segment spans residues 328–348; sequence ISFSCVAYPALVTIYCGQAAY. The Extracellular portion of the chain corresponds to 349–367; the sequence is LTKHTYNVSNTFYDSIPDP. An N-linked (GlcNAc...) asparagine glycan is attached at Asn-355. Residues 368–388 form a helical membrane-spanning segment; that stretch reads LYWPTFVVAVAASIIASQAMI. Residues 389-419 are Cytoplasmic-facing; that stretch reads SGAFSVISQSLRMGCFPRVKVVHTSAKYEGQ. Residues 420 to 440 traverse the membrane as a helical segment; sequence VYIPEINYLLMLACIAVTLAF. Topologically, residues 441–451 are extracellular; that stretch reads RTTEKIGHAYG. A helical membrane pass occupies residues 452-472; sequence IAVVTVMVITTLMVTLIMLVI. The Cytoplasmic portion of the chain corresponds to 473 to 476; sequence WKTN. Residues 477-497 form a helical membrane-spanning segment; sequence IVWIAIFLVVFGSIEMLYLSS. Residues 498–501 lie on the Extracellular side of the membrane; the sequence is VMYK. The chain crosses the membrane as a helical span at residues 502–522; that stretch reads FTSGGYLPLTITVVLMAMMAI. The Cytoplasmic portion of the chain corresponds to 523–785; that stretch reads WQYVHVLKYR…LLKVGMTYEL (263 aa). The interval 660 to 699 is disordered; sequence GGEVDETDKEEEPNAETTVVPSSNYVPSSGRIGSAHSSSS. The span at 662 to 673 shows a compositional bias: acidic residues; sequence EVDETDKEEEPN. Residues 674–686 are compositionally biased toward polar residues; the sequence is AETTVVPSSNYVP. Positions 687 to 697 are enriched in low complexity; it reads SSGRIGSAHSS.

Belongs to the HAK/KUP transporter (TC 2.A.72.3) family. Interacts with ILK1. Post-translationally, phosphorylated at the N-terminus (amino acids 1-95) by CIPK23. Predominantly expressed in the roots.

The protein localises to the cell membrane. In terms of biological role, high-affinity potassium transporter. Can also transport rubidium and cesium. Is essential with AKT1 for high-affinity potassium uptake in roots during seedling establishment and postgermination growth under low potassium conditions. Mediates potassium uptake by plant roots in response to low potassium conditions, by a calcium-, CBL-, and CIPK-dependent pathway. Positively regulated by the calcium sensors calcineurin B-like genes CBL1, CBL8, CBL9 and CBL10, and by phosphorylation by CIPK23. The polypeptide is Potassium transporter 5 (POT5) (Arabidopsis thaliana (Mouse-ear cress)).